The chain runs to 364 residues: Lysophosphatidic acid receptor 1 (364 aa).

The Extracellular segment spans residues 1-50 (MAAISTSIPVISQPQFTAMNEPQCFYNESIAFFYNRSGKHLATEWNTVSK). 2 disulfides stabilise this stretch: cysteine 24–cysteine 190 and cysteine 188–cysteine 195. Residues asparagine 27 and asparagine 35 are each glycosylated (N-linked (GlcNAc...) asparagine). Lysine 39 serves as a coordination point for a 1-acyl-sn-glycero-3-phosphate. Residues 51–75 (LVMGLGITVCIFIMLANLLVMVAIY) traverse the membrane as a helical segment. Residues 76 to 83 (VNRRFHFP) lie on the Cytoplasmic side of the membrane. The helical transmembrane segment at 84 to 107 (IYYLMANLAAADFFAGLAYFYLMF) threads the bilayer. At 108–121 (NTGPNTRRLTVSTW) the chain is on the extracellular side. The chain crosses the membrane as a helical span at residues 122-144 (LLRQGLIDTSLTASVANLLAIAI). 124-129 (RQGLID) is a binding site for a 1-acyl-sn-glycero-3-phosphate. Over 145 to 163 (ERHITVFRMQLHTRMSNRR) the chain is Cytoplasmic. Residues 164–184 (VVVVIVVIWTMAIVMGAIPSV) traverse the membrane as a helical segment. At 185-204 (GWNCICDIENCSNMAPLYSD) the chain is on the extracellular side. Residues 205-225 (SYLVFWAIFNLVTFVVMVVLY) form a helical membrane-spanning segment. Tryptophan 210 contributes to the a 1-acyl-sn-glycero-3-phosphate binding site. Residues 226-255 (AHIFGYVRQRTMRMSRHSSGPRRNRDTMMS) lie on the Cytoplasmic side of the membrane. Residues 256–280 (LLKTVVIVLGAFIICWTPGLVLLLL) form a helical membrane-spanning segment. Over 281-294 (DVCCPQCDVLAYEK) the chain is Extracellular. Cysteine 284 and cysteine 287 form a disulfide bridge. A helical transmembrane segment spans residues 295-315 (FFLLLAEFNSAMNPIIYSYRD). Residues 316–364 (KEMSATFRQILCCQRSENPTGPTEGSDRSASSLNHTILAGVHSNDHSVV) are Cytoplasmic-facing. The residue at position 341 (serine 341) is a Phosphoserine. Threonine 351 is modified (phosphothreonine).

The protein belongs to the G-protein coupled receptor 1 family. Interacts with RALA and GRK2. Interacts with GNAQ and GNA13. Interacts with CD14; the interaction is enhanced by exposure to bacterial lipopolysaccharide (LPS). Post-translationally, N-glycosylated. In terms of tissue distribution, expressed in many adult organs, including brain, heart, colon, small intestine, placenta, prostate, ovary, pancreas, testes, spleen, skeletal muscle, and kidney. Little or no expression in liver, lung, thymus, or peripheral blood leukocytes. Detected in lung fibroblasts from bronchoalveolar fluid from patients with idiopathic pulmonary fibrosis. Detected in bone marrow-derived mesenchymal stem cells.

The protein resides in the cell surface. Its subcellular location is the cell membrane. It localises to the endosome. Its function is as follows. Receptor for lysophosphatidic acid (LPA). Plays a role in the reorganization of the actin cytoskeleton, cell migration, differentiation and proliferation, and thereby contributes to the responses to tissue damage and infectious agents. Activates downstream signaling cascades via the G(i)/G(o), G(12)/G(13), and G(q) families of heteromeric G proteins. Signaling inhibits adenylyl cyclase activity and decreases cellular cAMP levels. Signaling triggers an increase of cytoplasmic Ca(2+) levels. Activates RALA; this leads to the activation of phospholipase C (PLC) and the formation of inositol 1,4,5-trisphosphate. Signaling mediates activation of down-stream MAP kinases. Contributes to the regulation of cell shape. Promotes Rho-dependent reorganization of the actin cytoskeleton in neuronal cells and neurite retraction. Promotes the activation of Rho and the formation of actin stress fibers. Promotes formation of lamellipodia at the leading edge of migrating cells via activation of RAC1. Through its function as LPA receptor, plays a role in chemotaxis and cell migration, including responses to injury and wounding. Plays a role in triggering inflammation in response to bacterial lipopolysaccharide (LPS) via its interaction with CD14. Promotes cell proliferation in response to LPA. Inhibits the intracellular ciliogenesis pathway in response to LPA and through AKT1 activation. Required for normal skeleton development. May play a role in osteoblast differentiation. Required for normal brain development. Required for normal proliferation, survival and maturation of newly formed neurons in the adult dentate gyrus. Plays a role in pain perception and in the initiation of neuropathic pain. The protein is Lysophosphatidic acid receptor 1 (LPAR1) of Homo sapiens (Human).